A 1352-amino-acid chain; its full sequence is Spike glycoprotein (1352 aa).

An N-terminal signal peptide occupies residues 1 to 12; the sequence is MTLLMCLLMSLL. The Extracellular portion of the chain corresponds to 13-1297; sequence IFVRGCDSQF…GNYTYYNKWP (1285 aa). Residues 21 to 356 enclose the BetaCoV S1-NTD domain; it reads QFVDMSPASN…DDLSQLHCSY (336 aa). N-linked (GlcNAc...) asparagine; by host glycosylation is found at N30, N71, N111, N132, N162, N172, N227, and N241. Intrachain disulfides connect C191–C242 and C344–C354. N384 carries an N-linked (GlcNAc...) asparagine; by host glycan. One can recognise a BetaCoV S1-CTD domain in the interval 386-592; the sequence is TECDFSPMLT…GTGTDSVCPM (207 aa). A disulfide bond links C388 and C412. N415 carries an N-linked (GlcNAc...) asparagine; by host glycan. 2 disulfides stabilise this stretch: C430-C483 and C442-C590. Residues N492, N624, N723, N762, N773, N784, and N869 are each glycosylated (N-linked (GlcNAc...) asparagine; by host). Fusion peptide regions lie at residues 887–908 and 906–928; these read SAIE…MQGY and QGYD…AQYV. C911 and C924 are joined by a disulfide. The segment at 993–1043 is heptad repeat 1; that stretch reads QKLIANKFNQALGAMQTGFTTSNLAFSKVQDAVNANAQALSKLASELSNTF. The stretch at 1022–1066 forms a coiled coil; sequence QDAVNANAQALSKLASELSNTFGAISSSISDILARLDTVEQDAQI. 8 N-linked (GlcNAc...) asparagine; by host glycosylation sites follow: N1144, N1147, N1174, N1226, N1242, N1257, N1278, and N1289. Positions 1247 to 1286 are heptad repeat 2; sequence GPNFAEISKINTTLLDLSDEMAMLQEVVKQLNDSYIDLKE. Residues 1259–1287 are a coiled coil; it reads TLLDLSDEMAMLQEVVKQLNDSYIDLKEL. Residues 1298-1318 form a helical membrane-spanning segment; it reads WYVWLGFIAGLVALLLCVFFL. The Cytoplasmic segment spans residues 1319–1352; that stretch reads LCCTGCGTSCLGKMKCKNCCDSYEEYDVEKIHVH. The short motif at 1350–1352 is the KxHxx element; that stretch reads HVH.

Belongs to the betacoronaviruses spike protein family. In terms of assembly, homotrimer; each monomer consists of a S1 and a S2 subunit. The resulting peplomers protrude from the virus surface as spikes. In terms of processing, specific enzymatic cleavages in vivo yield mature proteins. The precursor is processed into S1 and S2 by host cell furin or another cellular protease to yield the mature S1 and S2 proteins. Additionally, a second cleavage leads to the release of a fusion peptide after viral attachment to host cell receptor. The cytoplasmic Cys-rich domain is palmitoylated. Spike glycoprotein is digested within host endosomes.

Its subcellular location is the virion membrane. The protein resides in the host endoplasmic reticulum-Golgi intermediate compartment membrane. The protein localises to the host cell membrane. Attaches the virion to the cell membrane by interacting with host receptor, initiating the infection. Functionally, mediates fusion of the virion and cellular membranes by acting as a class I viral fusion protein. Under the current model, the protein has at least three conformational states: pre-fusion native state, pre-hairpin intermediate state, and post-fusion hairpin state. During viral and target cell membrane fusion, the coiled coil regions (heptad repeats) assume a trimer-of-hairpins structure, positioning the fusion peptide in close proximity to the C-terminal region of the ectodomain. The formation of this structure appears to drive apposition and subsequent fusion of viral and target cell membranes. In terms of biological role, acts as a viral fusion peptide which is unmasked following S2 cleavage occurring upon virus endocytosis. The protein is Spike glycoprotein of Bat coronavirus HKU4 (BtCoV).